The sequence spans 219 residues: Holliday junction branch migration complex subunit RuvA (219 aa).

Residues Met-1 to Ser-71 form a domain I region. The segment at Thr-72–Asn-150 is domain II. Positions Ile-151–Leu-161 are flexible linker. Residues Leu-161–Lys-219 are domain III.

This sequence belongs to the RuvA family. In terms of assembly, homotetramer. Forms an RuvA(8)-RuvB(12)-Holliday junction (HJ) complex. HJ DNA is sandwiched between 2 RuvA tetramers; dsDNA enters through RuvA and exits via RuvB. An RuvB hexamer assembles on each DNA strand where it exits the tetramer. Each RuvB hexamer is contacted by two RuvA subunits (via domain III) on 2 adjacent RuvB subunits; this complex drives branch migration. In the full resolvosome a probable DNA-RuvA(4)-RuvB(12)-RuvC(2) complex forms which resolves the HJ.

The protein localises to the cytoplasm. Functionally, the RuvA-RuvB-RuvC complex processes Holliday junction (HJ) DNA during genetic recombination and DNA repair, while the RuvA-RuvB complex plays an important role in the rescue of blocked DNA replication forks via replication fork reversal (RFR). RuvA specifically binds to HJ cruciform DNA, conferring on it an open structure. The RuvB hexamer acts as an ATP-dependent pump, pulling dsDNA into and through the RuvAB complex. HJ branch migration allows RuvC to scan DNA until it finds its consensus sequence, where it cleaves and resolves the cruciform DNA. This Prochlorococcus marinus subsp. pastoris (strain CCMP1986 / NIES-2087 / MED4) protein is Holliday junction branch migration complex subunit RuvA.